A 1403-amino-acid polypeptide reads, in one-letter code: Nidogen-2 (1403 aa).

Positions 1 to 30 (MFRDPTAGWLTPPSPLSLLVMLLLLSRVGA) are cleaved as a signal peptide. The NIDO domain maps to 108-274 (PFLADIDTSH…GVWAFHIGSR (167 aa)). Residues 323–403 (EDVEYPPVEP…KQGRPVGEGE (81 aa)) are disordered. 2 O-linked (Xyl...) (chondroitin sulfate) serine glycosylation sites follow: S386 and S475. Positions 386–395 (SASLDPQTKQ) are enriched in polar residues. The region spanning 507-547 (NLETCEHSHGRCSQHAFCTDYTTGFCCHCQSRFYGNGKHCL) is the EGF-like 1 domain. Intrachain disulfides connect C511–C524, C518–C533, and C535–C546. The 231-residue stretch at 551–781 (APHRVNGKVS…GPVEVDSAPV (231 aa)) folds into the Nidogen G2 beta-barrel domain. 3 N-linked (GlcNAc...) asparagine glycosylation sites follow: N681, N716, and N726. The 42-residue stretch at 782-823 (GVNPCYDGSHTCDTTARCHPGTGVDYTCECTPGFQGDGRSCV) folds into the EGF-like 2 domain. 18 cysteine pairs are disulfide-bonded: C786/C799, C793/C809, C811/C822, C828/C841, C835/C850, C852/C865, C875/C890, C882/C900, C902/C913, C919/C930, C924/C939, C941/C952, C968/C991, C1002/C1009, C1011/C1033, C1047/C1071, C1082/C1089, and C1091/C1112. The EGF-like 3; calcium-binding domain occupies 824-862 (DVNECATGFHRCGPNSVCVNLVGSYRCECRSGYEFADDQ). The 44-residue stretch at 871–914 (PPNPCLDGSHTCAPEGQARCIHHGGSSFSCACLPGFIGTGHQCS) folds into the EGF-like 4 domain. The EGF-like 5; calcium-binding domain occupies 915 to 953 (DVDECAENRCHEAAICYNTPGSFSCRCQPGYRGDGFHCT). The Cell attachment site signature appears at 946–948 (RGD). Thyroglobulin type-1 domains lie at 965-1033 (LKPC…PPHC) and 1044-1112 (RTVC…RPAC). The disordered stretch occupies residues 1021–1043 (GTQTPPGSTPPHCGPPPEPTQRP). Pro residues predominate over residues 1027–1040 (GSTPPHCGPPPEPT). N1152 is a glycosylation site (N-linked (GlcNAc...) asparagine). LDL-receptor class B repeat units follow at residues 1182-1225 (RMVY…DHFR), 1226-1268 (RTMY…DPIR), 1269-1313 (GNLY…DPFS), 1314-1355 (KLLC…YADH), and 1357-1401 (YHTD…CPTG). R1336 carries the post-translational modification Omega-N-methylarginine.

Interacts with LAMA2. Interacts with COL13A1. Interacts with EFEMP2. Highly N- and O-glycosylated.

The protein localises to the secreted. It is found in the extracellular space. It localises to the extracellular matrix. The protein resides in the basement membrane. Functionally, cell adhesion glycoprotein. Might be involved in osteoblast differentiation. It probably has a role in cell-extracellular matrix interactions. The sequence is that of Nidogen-2 (Nid2) from Mus musculus (Mouse).